We begin with the raw amino-acid sequence, 293 residues long: 4-diphosphocytidyl-2-C-methyl-D-erythritol kinase (293 aa).

K10 is a catalytic residue. 96–106 (PIAAGLGGGSS) lines the ATP pocket. D138 is a catalytic residue.

This sequence belongs to the GHMP kinase family. IspE subfamily.

It catalyses the reaction 4-CDP-2-C-methyl-D-erythritol + ATP = 4-CDP-2-C-methyl-D-erythritol 2-phosphate + ADP + H(+). The protein operates within isoprenoid biosynthesis; isopentenyl diphosphate biosynthesis via DXP pathway; isopentenyl diphosphate from 1-deoxy-D-xylulose 5-phosphate: step 3/6. In terms of biological role, catalyzes the phosphorylation of the position 2 hydroxy group of 4-diphosphocytidyl-2C-methyl-D-erythritol. This is 4-diphosphocytidyl-2-C-methyl-D-erythritol kinase from Caulobacter sp. (strain K31).